Here is a 470-residue protein sequence, read N- to C-terminus: MEELQGYLERDRFRKQHFLYPLLFKEYIYTFAHDRGLNGSIFYESAEIFGYDNKSSSVLVKRLIIRMYQQNYLIYSVNDSNQNRFVGHNNYLYFHFYSQMILEVFTVIVEIPFLLRLVSSLERKIPKSQNLNLRSIHSIFPFLHEYPNWNSLITPNNSIFLFSKENKRLFRFLHNSYVSECEFVLVFLRKQSSYLRLTSSGAFLERTHFYGKIEHLHLIVVRRNYFQKTLWFFKDPFMHYVRYQGKAILVSKGTHLLMKKWKCHLVNFWQYYFHFWSQPYRIHINQLSNCSFYFLGYLSSVLINPSVVRNQMLENSYLIDTVTKXFDTRVPVISFIGSLAKAKFCTVSGHPISKPIWTDLSDCDIIDRFGRICRNLSNYLSGSSKKQSLYRIKYILRFSCARTLARKHKSMVRAFLQRLGSGLLEEFFTEEEQVVSLIFPKANSFSLHGSHRERIWYLDITCINDLVNYS.

It belongs to the intron maturase 2 family. MatK subfamily.

The protein resides in the plastid. The protein localises to the chloroplast. Functionally, usually encoded in the trnK tRNA gene intron. Probably assists in splicing its own and other chloroplast group II introns. This chain is Maturase K, found in Nypa fruticans (Nypa palm).